The chain runs to 624 residues: Mannosyl-oligosaccharide 1,2-alpha-mannosidase MNS3 (624 aa).

Residues 1–43 lie on the Cytoplasmic side of the membrane; it reads MSKSLPYSVKDIHYDNAKFRHRSPLKVFSQSLLTLSTKRNYAS. Residues 44–64 traverse the membrane as a helical; Signal-anchor for type II membrane protein segment; sequence CSTGKFLILILFFGVACLMLM. The Lumenal portion of the chain corresponds to 65–624; sequence SKSPNESGLN…AHPLPIRRNT (560 aa). N-linked (GlcNAc...) asparagine glycans are attached at residues Asn69 and Asn114. The tract at residues 91–123 is disordered; sequence LRKPPRLPPRLSPDEGQLRGSSTNGSTISNSDP. Residues 110 to 121 are compositionally biased toward low complexity; that stretch reads GSSTNGSTISNS. The active-site Proton donor is Glu212. A glycan (N-linked (GlcNAc...) asparagine) is linked at Asn236. The active site involves Asp357. N-linked (GlcNAc...) asparagine glycosylation occurs at Asn377. A disulfide bridge connects residues Cys428 and Cys471. The active-site Proton donor is Glu485. N-linked (GlcNAc...) asparagine glycosylation is present at Asn503. Glu526 is a catalytic residue. Residue Thr613 participates in Ca(2+) binding.

The protein belongs to the glycosyl hydrolase 47 family. It depends on Ca(2+) as a cofactor. Mn(2+) serves as cofactor. The cofactor is Mg(2+). As to expression, expressed in flowers, siliques, stems, leaves, roots, stamens and sepals.

Its subcellular location is the golgi apparatus. The protein resides in the cis-Golgi network membrane. The catalysed reaction is N(4)-(alpha-D-Man-(1-&gt;2)-alpha-D-Man-(1-&gt;2)-alpha-D-Man-(1-&gt;3)-[alpha-D-Man-(1-&gt;2)-alpha-D-Man-(1-&gt;3)-[alpha-D-Man-(1-&gt;2)-alpha-D-Man-(1-&gt;6)]-alpha-D-Man-(1-&gt;6)]-beta-D-Man-(1-&gt;4)-beta-D-GlcNAc-(1-&gt;4)-beta-D-GlcNAc)-L-asparaginyl-[protein] (N-glucan mannose isomer 9A1,2,3B1,2,3) + 4 H2O = N(4)-(alpha-D-Man-(1-&gt;3)-[alpha-D-Man-(1-&gt;3)-[alpha-D-Man-(1-&gt;6)]-alpha-D-Man-(1-&gt;6)]-beta-D-Man-(1-&gt;4)-beta-D-GlcNAc-(1-&gt;4)-beta-D-GlcNAc)-L-asparaginyl-[protein] (N-glucan mannose isomer 5A1,2) + 4 beta-D-mannose. The enzyme catalyses N(4)-(alpha-D-Man-(1-&gt;2)-alpha-D-Man-(1-&gt;2)-alpha-D-Man-(1-&gt;3)-[alpha-D-Man-(1-&gt;3)-[alpha-D-Man-(1-&gt;2)-alpha-D-Man-(1-&gt;6)]-alpha-D-Man-(1-&gt;6)]-beta-D-Man-(1-&gt;4)-beta-D-GlcNAc-(1-&gt;4)-beta-D-GlcNAc)-L-asparaginyl-[protein] (N-glucan mannose isomer 8A1,2,3B1,3) + 3 H2O = N(4)-(alpha-D-Man-(1-&gt;3)-[alpha-D-Man-(1-&gt;3)-[alpha-D-Man-(1-&gt;6)]-alpha-D-Man-(1-&gt;6)]-beta-D-Man-(1-&gt;4)-beta-D-GlcNAc-(1-&gt;4)-beta-D-GlcNAc)-L-asparaginyl-[protein] (N-glucan mannose isomer 5A1,2) + 3 beta-D-mannose. It catalyses the reaction N(4)-(alpha-D-Man-(1-&gt;2)-alpha-D-Man-(1-&gt;2)-alpha-D-Man-(1-&gt;3)-[alpha-D-Man-(1-&gt;2)-alpha-D-Man-(1-&gt;3)-[alpha-D-Man-(1-&gt;2)-alpha-D-Man-(1-&gt;6)]-alpha-D-Man-(1-&gt;6)]-beta-D-Man-(1-&gt;4)-beta-D-GlcNAc-(1-&gt;4)-beta-D-GlcNAc)-L-asparaginyl-[protein] (N-glucan mannose isomer 9A1,2,3B1,2,3) + H2O = N(4)-(alpha-D-Man-(1-&gt;2)-alpha-D-Man-(1-&gt;2)-alpha-D-Man-(1-&gt;3)-[alpha-D-Man-(1-&gt;3)-[alpha-D-Man-(1-&gt;2)-alpha-D-Man-(1-&gt;6)]-alpha-D-Man-(1-&gt;6)]-beta-D-Man-(1-&gt;4)-beta-D-GlcNAc-(1-&gt;4)-beta-D-GlcNAc)-L-asparaginyl-[protein] (N-glucan mannose isomer 8A1,2,3B1,3) + beta-D-mannose. It participates in protein modification; protein glycosylation. Its activity is regulated as follows. Inhibited by kifunensine and 1-deoxymannojirimycin, but not by swainsonine. Its function is as follows. Class I alpha-mannosidase essential for early N-glycan processing. Removes preferentially alpha-1,2-linked mannose residues from Man(9)GlcNAc(2) to produce Man(8)GlcNAc(2). Involved in root development and cell wall biosynthesis. This Arabidopsis thaliana (Mouse-ear cress) protein is Mannosyl-oligosaccharide 1,2-alpha-mannosidase MNS3 (MNS3).